The following is a 533-amino-acid chain: GMP synthase [glutamine-hydrolyzing] (533 aa).

The 194-residue stretch at 22–215 (RILILDFGSQ…THNVAGCSGT (194 aa)) folds into the Glutamine amidotransferase type-1 domain. The active-site Nucleophile is the Cys-99. Active-site residues include His-189 and Glu-191. The GMPS ATP-PPase domain maps to 216–408 (WTMAGFRELE…LGIPESIVGR (193 aa)). 243 to 249 (SGGVDSS) is a binding site for ATP.

In terms of assembly, homodimer.

The catalysed reaction is XMP + L-glutamine + ATP + H2O = GMP + L-glutamate + AMP + diphosphate + 2 H(+). It participates in purine metabolism; GMP biosynthesis; GMP from XMP (L-Gln route): step 1/1. Its function is as follows. Catalyzes the synthesis of GMP from XMP. This chain is GMP synthase [glutamine-hydrolyzing], found in Gluconobacter oxydans (strain 621H) (Gluconobacter suboxydans).